The primary structure comprises 250 residues: uncharacterized protein (250 aa).

The region spanning 7–244 (LKVEDLHVYR…YKKECGKCYK (238 aa)) is the ABC transporter domain. ATP is bound at residue 39–46 (GPNGAGKS).

Belongs to the ABC transporter superfamily.

This is an uncharacterized protein from Methanocaldococcus jannaschii (strain ATCC 43067 / DSM 2661 / JAL-1 / JCM 10045 / NBRC 100440) (Methanococcus jannaschii).